We begin with the raw amino-acid sequence, 218 residues long: Cytochrome b6 (218 aa).

The chain crosses the membrane as a helical span at residues Ile-35–Phe-55. Cys-38 is a heme c binding site. Residues His-89 and His-103 each coordinate heme b. Helical transmembrane passes span Ala-93 to Phe-113, Leu-119 to Tyr-139, and Leu-189 to Ile-209. Residues His-190 and His-205 each coordinate heme b.

Belongs to the cytochrome b family. PetB subfamily. The 4 large subunits of the cytochrome b6-f complex are cytochrome b6, subunit IV (17 kDa polypeptide, PetD), cytochrome f and the Rieske protein, while the 4 small subunits are PetG, PetL, PetM and PetN. The complex functions as a dimer. It depends on heme b as a cofactor. Heme c serves as cofactor.

It is found in the cellular thylakoid membrane. Functionally, component of the cytochrome b6-f complex, which mediates electron transfer between photosystem II (PSII) and photosystem I (PSI), cyclic electron flow around PSI, and state transitions. The sequence is that of Cytochrome b6 from Prochlorococcus marinus (strain MIT 9215).